The sequence spans 538 residues: Chaperonin GroEL 1 (538 aa).

ATP contacts are provided by residues 30–33, K51, 87–91, G415, 479–481, and D495; these read TLGP, DGTTT, and NAA.

The protein belongs to the chaperonin (HSP60) family. As to quaternary structure, forms a cylinder of 14 subunits composed of two heptameric rings stacked back-to-back. Interacts with the co-chaperonin GroES.

It is found in the cytoplasm. The enzyme catalyses ATP + H2O + a folded polypeptide = ADP + phosphate + an unfolded polypeptide.. In terms of biological role, together with its co-chaperonin GroES, plays an essential role in assisting protein folding. The GroEL-GroES system forms a nano-cage that allows encapsulation of the non-native substrate proteins and provides a physical environment optimized to promote and accelerate protein folding. The polypeptide is Chaperonin GroEL 1 (Chromobacterium violaceum (strain ATCC 12472 / DSM 30191 / JCM 1249 / CCUG 213 / NBRC 12614 / NCIMB 9131 / NCTC 9757 / MK)).